Consider the following 413-residue polypeptide: uncharacterized protein (413 aa).

The helical transmembrane segment at 14–34 (LLFFTVVIIPIFYYIYKIVYL) threads the bilayer. Residues Asn46, Asn55, Asn103, Asn171, Asn179, Asn184, Asn220, Asn252, Asn260, Asn273, Asn362, Asn366, Asn374, Asn378, Asn393, and Asn408 are each glycosylated (N-linked (GlcNAc...) asparagine; by host). The segment covering 250 to 263 (TKNSTETNSDNNSE) has biased composition (low complexity). Positions 250–277 (TKNSTETNSDNNSEIVSETNSETNYSTP) are disordered. Over residues 264-277 (IVSETNSETNYSTP) the composition is skewed to polar residues.

Its subcellular location is the membrane. This is an uncharacterized protein from Acanthamoeba polyphaga (Amoeba).